A 467-amino-acid chain; its full sequence is Fumarate hydratase class II (467 aa).

Residues 98 to 100 (SGT), Arg-126, 129 to 132 (HPND), 139 to 141 (SSN), and Thr-187 each bind substrate. The active-site Proton donor/acceptor is His-188. Residue Ser-318 is part of the active site. Substrate-binding positions include Ser-319 and 324 to 326 (KVN).

The protein belongs to the class-II fumarase/aspartase family. Fumarase subfamily. Homotetramer.

It localises to the cytoplasm. The catalysed reaction is (S)-malate = fumarate + H2O. It functions in the pathway carbohydrate metabolism; tricarboxylic acid cycle; (S)-malate from fumarate: step 1/1. Functionally, involved in the TCA cycle. Catalyzes the stereospecific interconversion of fumarate to L-malate. The protein is Fumarate hydratase class II of Shigella flexneri.